The sequence spans 397 residues: Putative teichuronic acid biosynthesis glycosyltransferase TuaH (397 aa).

This sequence belongs to the glycosyltransferase group 1 family.

It functions in the pathway cell wall biogenesis; teichuronic acid biosynthesis. This Bacillus subtilis (strain 168) protein is Putative teichuronic acid biosynthesis glycosyltransferase TuaH (tuaH).